A 302-amino-acid chain; its full sequence is Sulfate adenylyltransferase subunit 2 (302 aa).

Belongs to the PAPS reductase family. CysD subfamily. Heterodimer composed of CysD, the smaller subunit, and CysN.

It catalyses the reaction sulfate + ATP + H(+) = adenosine 5'-phosphosulfate + diphosphate. The protein operates within sulfur metabolism; hydrogen sulfide biosynthesis; sulfite from sulfate: step 1/3. In terms of biological role, with CysN forms the ATP sulfurylase (ATPS) that catalyzes the adenylation of sulfate producing adenosine 5'-phosphosulfate (APS) and diphosphate, the first enzymatic step in sulfur assimilation pathway. APS synthesis involves the formation of a high-energy phosphoric-sulfuric acid anhydride bond driven by GTP hydrolysis by CysN coupled to ATP hydrolysis by CysD. The protein is Sulfate adenylyltransferase subunit 2 of Enterobacter sp. (strain 638).